The chain runs to 415 residues: Carboxypeptidase B (415 aa).

An N-terminal signal peptide occupies residues 1-13 (MLLLLALVSVALA). A propeptide spans 14–108 (HASEEHFDGN…LESQFDSHTR (95 aa)) (activation peptide). A Peptidase M14 domain is found at 116 to 410 (KYNKWETIEA…LAVKYIANYV (295 aa)). The cysteines at positions 171 and 184 are disulfide-linked. Positions 174 and 177 each coordinate Zn(2+). Substrate contacts are provided by residues 174–177 (HARE), Arg-232, and 249–250 (NR). 2 disulfide bridges follow: Cys-243–Cys-266 and Cys-257–Cys-271. Position 302 (His-302) interacts with Zn(2+). Residues 303 to 304 (SY) and Tyr-354 each bind substrate. Glu-376 (proton donor/acceptor) is an active-site residue.

Belongs to the peptidase M14 family. The cofactor is Zn(2+).

It is found in the secreted. Its subcellular location is the zymogen granule lumen. It carries out the reaction Preferential release of a C-terminal lysine or arginine amino acid.. The polypeptide is Carboxypeptidase B (Cpb1) (Rattus norvegicus (Rat)).